We begin with the raw amino-acid sequence, 511 residues long: Ribose import ATP-binding protein RbsA (511 aa).

2 ABC transporter domains span residues 9 to 245 (FEAK…VGRD) and 261 to 506 (LRAE…LPRR). Residue 41 to 48 (GENGAGKS) coordinates ATP.

This sequence belongs to the ABC transporter superfamily. Ribose importer (TC 3.A.1.2.1) family. The complex is composed of an ATP-binding protein (RbsA), two transmembrane proteins (RbsC) and a solute-binding protein (RbsB).

It localises to the cell inner membrane. The enzyme catalyses D-ribose(out) + ATP + H2O = D-ribose(in) + ADP + phosphate + H(+). In terms of biological role, part of the ABC transporter complex RbsABC involved in ribose import. Responsible for energy coupling to the transport system. The sequence is that of Ribose import ATP-binding protein RbsA from Rhodopirellula baltica (strain DSM 10527 / NCIMB 13988 / SH1).